We begin with the raw amino-acid sequence, 266 residues long: Vitamin B12-binding protein (266 aa).

An N-terminal signal peptide occupies residues 1–22; that stretch reads MVKQMFRALVALLLTLPVWLYA. The Fe/B12 periplasmic-binding domain occupies 25-266; that stretch reads RVITLSPANT…QLCNALSQVN (242 aa). Cyanocob(III)alamin is bound by residues Y50 and 242–246; that span reads DWFER. Cysteines 183 and 259 form a disulfide.

Belongs to the BtuF family. The complex is composed of two ATP-binding proteins (BtuD), two transmembrane proteins (BtuC) and a solute-binding protein (BtuF).

It localises to the periplasm. Functionally, part of the ABC transporter complex BtuCDF involved in vitamin B12 import. Binds vitamin B12 and delivers it to the periplasmic surface of BtuC. This is Vitamin B12-binding protein from Salmonella choleraesuis (strain SC-B67).